The primary structure comprises 257 residues: Phosphonates import ATP-binding protein PhnC (257 aa).

In terms of domain architecture, ABC transporter spans 4–248 (IEFKNVSKVY…VFSEIYGRTI (245 aa)). 37–44 (GLSGAGKS) contributes to the ATP binding site.

Belongs to the ABC transporter superfamily. Phosphonates importer (TC 3.A.1.9.1) family. The complex is composed of two ATP-binding proteins (PhnC), two transmembrane proteins (PhnE) and a solute-binding protein (PhnD).

It localises to the cell membrane. It carries out the reaction phosphonate(out) + ATP + H2O = phosphonate(in) + ADP + phosphate + H(+). Its function is as follows. Part of the ABC transporter complex PhnCDE involved in phosphonates import. Responsible for energy coupling to the transport system. This chain is Phosphonates import ATP-binding protein PhnC, found in Staphylococcus aureus (strain COL).